Here is a 311-residue protein sequence, read N- to C-terminus: Protein translocase subunit SecF (311 aa).

The next 6 membrane-spanning stretches (helical) occupy residues 19–39 (AIYASLFLIGVSLVSLFTQGL), 142–162 (MLAMLYAMVAILIYISFRFEL), 166–186 (LGAVLALVHDVVLTMGFFSVL), 192–212 (LVVVAALLTVVGYSLNDTIVV), 245–265 (ITSLTTVLVLIALFVLGGAVI), and 272–292 (LLFGVGIGTYSSIFVASPLVL).

The protein belongs to the SecD/SecF family. SecF subfamily. In terms of assembly, forms a complex with SecD. Part of the essential Sec protein translocation apparatus which comprises SecA, SecYEG and auxiliary proteins SecDF-YajC and YidC.

It localises to the cell inner membrane. Its function is as follows. Part of the Sec protein translocase complex. Interacts with the SecYEG preprotein conducting channel. SecDF uses the proton motive force (PMF) to complete protein translocation after the ATP-dependent function of SecA. The sequence is that of Protein translocase subunit SecF from Magnetococcus marinus (strain ATCC BAA-1437 / JCM 17883 / MC-1).